A 141-amino-acid polypeptide reads, in one-letter code: HTH-type transcriptional repressor NsrR (141 aa).

Residues 2-129 (QLTNFTDFGL…DKHTIQDMLT (128 aa)) enclose the HTH rrf2-type domain. A DNA-binding region (H-T-H motif) is located at residues 28-51 (ITVVTETFDVSRNHMVKIINKLGQ). The [2Fe-2S] cluster site is built by cysteine 91, cysteine 96, and cysteine 102.

[2Fe-2S] cluster serves as cofactor.

Nitric oxide-sensitive repressor of genes involved in protecting the cell against nitrosative stress. May require iron for activity. The sequence is that of HTH-type transcriptional repressor NsrR from Aliivibrio fischeri (strain ATCC 700601 / ES114) (Vibrio fischeri).